A 68-amino-acid chain; its full sequence is Frenatin-3 (68 aa).

The first 22 residues, 1–22, serve as a signal peptide directing secretion; sequence MHFLKKSIFLVLFLGLVSLSIC. The propeptide occupies 23–46; the sequence is EKEKREDQNEEEVDENEEESEEKR. Positions 26 to 47 are disordered; that stretch reads KREDQNEEEVDENEEESEEKRG. The span at 30-42 shows a compositional bias: acidic residues; it reads QNEEEVDENEEES.

It belongs to the frog skin active peptide (FSAP) family. Frenatin subfamily. Expressed by the granular skin glands.

It is found in the secreted. Its function is as follows. Antimicrobial peptide with activity against both Gram-positive and Gram-negative bacteria. Antibacterial activities have been tested against Bacillus cereus (MIC=12.5 ug/ml), Escherichia coli (MIC=50 ug/ml), Leuconostoc mesenteroides (MIC=25 ug/ml), Micrococcus luteus (MIC=1.5 ug/ml), Pastewella haemolytica (MIC=0.8 ug/ml), Staphylococcus aureus (MIC&lt;l00 ug/ml), Streptococcus faecalis (MIC&lt;150 ug/ml) and Streptococcus uberis (MIC=50 ug/ml). Strongly inhibits the formation of NO by neuronal nitric oxide synthase (nNOS) at micromolar concentrations. Acts by a non-competitive mechanism, probably by binding to calcium/calmodulin and as a consequence blocking calmodulin attachment to nNOS. The sequence is that of Frenatin-3 from Nyctimystes infrafrenatus (White-lipped tree frog).